An 85-amino-acid polypeptide reads, in one-letter code: Protein C4 (85 aa).

Residue Gly2 is the site of N-myristoyl glycine; by host attachment. The interval 42–65 is disordered; that stretch reads LNPAPTSSPTSTRTETQLNGGNSR. Over residues 44–57 the composition is skewed to low complexity; sequence PAPTSSPTSTRTET.

The protein belongs to the geminiviridae protein AC4/C4 family. As to quaternary structure, interacts with Arabidopsis thaliana RCH2, ASK7/ASK-eta and ASK6/ASK-zeta. Post-translationally, phosphorylated by Arabidopsis thaliana ASK7/ASK-eta mainly on threonine and serine residues. Expressed in vascular tissues, and especially in phloem cells.

It is found in the host cell membrane. Its function is as follows. Major determinant of pathogenesis that affects the hyperplastic response of the host to viral infection. Mediates the induction of cell division in permissive cells, mainly in phloem. May act as a suppressor of RNA-mediated gene silencing, also known as post-transcriptional gene silencing (PTGS), a mechanism of plant viral defense that limits the accumulation of viral RNAs. This Beet curly top virus (strain California/Logan) (BCTV) protein is Protein C4.